The following is a 308-amino-acid chain: Mu-like prophage FluMu major head subunit (308 aa).

To phage Mu protein T.

In Haemophilus influenzae (strain ATCC 51907 / DSM 11121 / KW20 / Rd), this protein is Mu-like prophage FluMu major head subunit.